We begin with the raw amino-acid sequence, 400 residues long: Riboflavin biosynthesis protein RibBA (400 aa).

A DHBP synthase region spans residues 1–202; sequence MTTFGTIEQA…IADLVMYRRR (202 aa). Residues 28–29, Asp-33, 141–145, and Glu-165 each bind D-ribulose 5-phosphate; these read RE and RTGHT. Glu-29 contributes to the Mg(2+) binding site. His-144 is a binding site for Mg(2+). The segment at 203 to 400 is GTP cyclohydrolase II; it reads TEKQVELVAE…KRDRMGHLLG (198 aa). 253-257 lines the GTP pocket; it reads RAHSE. Residues Cys-258, Cys-269, and Cys-271 each contribute to the Zn(2+) site. Residues Gln-274, 297 to 299, and Thr-319 contribute to the GTP site; that span reads EGR. Asp-331 functions as the Proton acceptor; for GTP cyclohydrolase activity in the catalytic mechanism. Catalysis depends on Arg-333, which acts as the Nucleophile; for GTP cyclohydrolase activity. Thr-354 and Lys-359 together coordinate GTP.

This sequence in the N-terminal section; belongs to the DHBP synthase family. The protein in the C-terminal section; belongs to the GTP cyclohydrolase II family. It depends on Mg(2+) as a cofactor. Mn(2+) is required as a cofactor. Requires Zn(2+) as cofactor.

It carries out the reaction D-ribulose 5-phosphate = (2S)-2-hydroxy-3-oxobutyl phosphate + formate + H(+). The catalysed reaction is GTP + 4 H2O = 2,5-diamino-6-hydroxy-4-(5-phosphoribosylamino)-pyrimidine + formate + 2 phosphate + 3 H(+). Its pathway is cofactor biosynthesis; riboflavin biosynthesis; 2-hydroxy-3-oxobutyl phosphate from D-ribulose 5-phosphate: step 1/1. It functions in the pathway cofactor biosynthesis; riboflavin biosynthesis; 5-amino-6-(D-ribitylamino)uracil from GTP: step 1/4. Catalyzes the conversion of D-ribulose 5-phosphate to formate and 3,4-dihydroxy-2-butanone 4-phosphate. In terms of biological role, catalyzes the conversion of GTP to 2,5-diamino-6-ribosylamino-4(3H)-pyrimidinone 5'-phosphate (DARP), formate and pyrophosphate. The polypeptide is Riboflavin biosynthesis protein RibBA (Salinispora tropica (strain ATCC BAA-916 / DSM 44818 / JCM 13857 / NBRC 105044 / CNB-440)).